A 223-amino-acid polypeptide reads, in one-letter code: 2-C-methyl-D-erythritol 4-phosphate cytidylyltransferase (223 aa).

It belongs to the IspD/TarI cytidylyltransferase family. IspD subfamily.

The catalysed reaction is 2-C-methyl-D-erythritol 4-phosphate + CTP + H(+) = 4-CDP-2-C-methyl-D-erythritol + diphosphate. The protein operates within isoprenoid biosynthesis; isopentenyl diphosphate biosynthesis via DXP pathway; isopentenyl diphosphate from 1-deoxy-D-xylulose 5-phosphate: step 2/6. Functionally, catalyzes the formation of 4-diphosphocytidyl-2-C-methyl-D-erythritol from CTP and 2-C-methyl-D-erythritol 4-phosphate (MEP). In Prochlorococcus marinus (strain MIT 9301), this protein is 2-C-methyl-D-erythritol 4-phosphate cytidylyltransferase.